A 1186-amino-acid chain; its full sequence is Sericin 1 (1186 aa).

Positions 1-21 (MRFVLCCTLIALAALSVKAFG) are cleaved as a signal peptide. Composition is skewed to polar residues over residues 39-48 (AASSESSYLN) and 104-115 (NGGSASAGQSRD). Disordered regions lie at residues 39–119 (AASS…SSLR), 131–494 (AVAA…EDSS), and 518–1157 (GGAT…VNRL). Over residues 145 to 155 (AQQNAQANWNA) the composition is skewed to low complexity. The span at 180 to 198 (SDKDITAASKDDSRADSSR) shows a compositional bias: basic and acidic residues. Residues 211-224 (SESAGLSDRSASSS) show a composition bias toward low complexity. The segment covering 256 to 275 (YYNSSPDGSYNAGTRDSSIS) has biased composition (polar residues). A compositionally biased stretch (basic and acidic residues) spans 286–299 (ADKDQIRAANDRSS). Residues 300 to 312 (SKQLKQSSAQISS) show a composition bias toward low complexity. The segment covering 321 to 334 (SKDRQYSNDKRSKS) has biased composition (basic and acidic residues). 3 stretches are compositionally biased toward polar residues: residues 356–380 (RQSNTNYADQNSVRSDSAASDQTSK), 393–409 (AHSSGSRGSQNQKSSSY), and 416–445 (FSSSTNTEKSKFSSSNSVVETSDGASASRE). Composition is skewed to low complexity over residues 465–491 (ASQSSSSRSSQESASYSSSSSSSTLSE), 518–537 (GGATKSGASSSTQATTVSGA), 553–698 (SSSS…YGYS), 705–1004 (RVSS…YSSS), 1015–1075 (SSSN…ASSE), and 1097–1145 (SSTT…TSSS). 11 tandem repeats follow at residues 593–630 (SSTGSTSNTDSSSKSAGSRTSGGSSTYGYSSSHRGGSV), 631–668 (SSTGSSSNTDSSTKNAGSSTSGGSSTYGYSSSHRGGSV), 669–706 (SSTGSSSNTDSSTKSAGSSTSGGSSTYGYSSRHRGGRV), 707–744 (SSTGSSSTTDASSNSVGSSTSGGSSTYGYSSNSRDGSV), 745–782 (SSTGSSSNTDSNSNSAGSSTSGGSSTYGYSSNSRDGSV), 783–820 (SSTGSSSNTDSNSNSAGSSTSGGSSTYGYSSNSRDGSV), 821–858 (SSTGSSSNTDASTDLTGSSTSGGSSTYGYSSDSRDGSV), 859–896 (SSTGSSSNTDASTDLAGSSTSGGSSTYGYSSDCGDGSV), 897–934 (SSTGSSSNTDASTDLAGSSTSGGSSTYGYSSDSRDGSV), 935–972 (SSTGSSSNTDASTDLAGSSTSGGSSTYGYSSNSRDGSV), and 973–1010 (SSTGSSSNTDASTDLTGSSTSGGSSTYGYSSSNRDGSV). Basic residues predominate over residues 1148–1157 (RSHHSGVNRL).

Produced exclusively in the middle (MSG) section of silk glands.

It localises to the secreted. Provides the silk fibroin thread with a sticky coating. Acts as a cement by sticking silk threads together. This Bombyx mori (Silk moth) protein is Sericin 1 (ser1).